The sequence spans 692 residues: Elongation factor G (692 aa).

Residues 8 to 282 (ENTRNIGIMA…GVVDYLPSPV (275 aa)) form the tr-type G domain. GTP contacts are provided by residues 17–24 (AHIDAGKT), 81–85 (DTPGH), and 135–138 (NKMD).

It belongs to the TRAFAC class translation factor GTPase superfamily. Classic translation factor GTPase family. EF-G/EF-2 subfamily.

Its subcellular location is the cytoplasm. Catalyzes the GTP-dependent ribosomal translocation step during translation elongation. During this step, the ribosome changes from the pre-translocational (PRE) to the post-translocational (POST) state as the newly formed A-site-bound peptidyl-tRNA and P-site-bound deacylated tRNA move to the P and E sites, respectively. Catalyzes the coordinated movement of the two tRNA molecules, the mRNA and conformational changes in the ribosome. This is Elongation factor G from Anoxybacillus flavithermus (strain DSM 21510 / WK1).